Reading from the N-terminus, the 21-residue chain is Fibrinogen beta chain (21 aa).

Gln-1 carries the post-translational modification Pyrrolidone carboxylic acid. Residues 1-11 (QPSYDYDEEED) are compositionally biased toward acidic residues. The disordered stretch occupies residues 1–21 (QPSYDYDEEEDDRAKLRLDAR). At Tyr-6 the chain carries Sulfotyrosine. The span at 12-21 (DRAKLRLDAR) shows a compositional bias: basic and acidic residues.

In terms of assembly, heterohexamer; disulfide linked. Contains 2 sets of 3 non-identical chains (alpha, beta and gamma). The 2 heterotrimers are in head to head conformation with the N-termini in a small central domain. Conversion of fibrinogen to fibrin is triggered by thrombin, which cleaves fibrinopeptides A and B from alpha and beta chains, and thus exposes the N-terminal polymerization sites responsible for the formation of the soft clot.

It localises to the secreted. Cleaved by the protease thrombin to yield monomers which, together with fibrinogen alpha (FGA) and fibrinogen gamma (FGG), polymerize to form an insoluble fibrin matrix. Fibrin has a major function in hemostasis as one of the primary components of blood clots. In addition, functions during the early stages of wound repair to stabilize the lesion and guide cell migration during re-epithelialization. Was originally thought to be essential for platelet aggregation, based on in vitro studies using anticoagulated blood. However subsequent studies have shown that it is not absolutely required for thrombus formation in vivo. Enhances expression of SELP in activated platelets. Maternal fibrinogen is essential for successful pregnancy. Fibrin deposition is also associated with infection, where it protects against IFNG-mediated hemorrhage. May also facilitate the antibacterial immune response via both innate and T-cell mediated pathways. The sequence is that of Fibrinogen beta chain (FGB) from Antilocapra americana (Pronghorn).